Consider the following 478-residue polypeptide: Protein MAINTENANCE OF MERISTEMS (478 aa).

Residues 459-478 (ASTTNKRKRREEQQQTDWSE) are disordered. Residues 464-468 (KRKRR) carry the Nuclear localization signal motif.

In terms of tissue distribution, expressed in root meristem, root vasculature, shoot apical meristem (SAM), leaf vasculature and ovules.

The protein localises to the nucleus. Its function is as follows. Required for the organization of the root apical meristem (RAM) and the shoot apical meristem (SAM). Required to maintain genome stability and cell division activity in meristematic cells. This Arabidopsis thaliana (Mouse-ear cress) protein is Protein MAINTENANCE OF MERISTEMS.